The sequence spans 166 residues: Ribonuclease P protein component (166 aa).

Belongs to the RnpA family. In terms of assembly, consists of a catalytic RNA component (M1 or rnpB) and a protein subunit.

The enzyme catalyses Endonucleolytic cleavage of RNA, removing 5'-extranucleotides from tRNA precursor.. In terms of biological role, RNaseP catalyzes the removal of the 5'-leader sequence from pre-tRNA to produce the mature 5'-terminus. It can also cleave other RNA substrates such as 4.5S RNA. The protein component plays an auxiliary but essential role in vivo by binding to the 5'-leader sequence and broadening the substrate specificity of the ribozyme. The sequence is that of Ribonuclease P protein component from Helicobacter pylori (strain HPAG1).